The sequence spans 163 residues: Ribosome maturation factor RimP (163 aa).

This sequence belongs to the RimP family.

It is found in the cytoplasm. In terms of biological role, required for maturation of 30S ribosomal subunits. The sequence is that of Ribosome maturation factor RimP from Polynucleobacter necessarius subsp. necessarius (strain STIR1).